Here is a 107-residue protein sequence, read N- to C-terminus: Flagellar transcriptional regulator FlhD (107 aa).

This sequence belongs to the FlhD family. As to quaternary structure, homodimer; disulfide-linked. Forms a heterohexamer composed of two FlhC and four FlhD subunits. Each FlhC binds a FlhD dimer, forming a heterotrimer, and a hexamer assembles by dimerization of two heterotrimers.

Its subcellular location is the cytoplasm. Functionally, functions in complex with FlhC as a master transcriptional regulator that regulates transcription of several flagellar and non-flagellar operons by binding to their promoter region. Activates expression of class 2 flagellar genes, including fliA, which is a flagellum-specific sigma factor that turns on the class 3 genes. Also regulates genes whose products function in a variety of physiological pathways. In Bordetella avium (strain 197N), this protein is Flagellar transcriptional regulator FlhD.